Consider the following 557-residue polypeptide: Warthog protein 4 (557 aa).

An N-terminal signal peptide occupies residues 1 to 20 (MRFSLLALVLLSSSYKFTYG). The disordered stretch occupies residues 272–308 (QETNPQPPPPPGQQGGFVQPQGFQPQGGFQPQGFQPQ). Residues 287 to 308 (GFVQPQGFQPQGGFQPQGFQPQ) are compositionally biased toward low complexity.

The protein belongs to the hedgehog family. The C-terminal domain displays an autoproteolysis activity.

It is found in the secreted. Its subcellular location is the cell surface. The protein resides in the cell membrane. It localises to the extracellular space. Functionally, intercellular signal essential for a variety of patterning events during development. This chain is Warthog protein 4 (wrt-4), found in Caenorhabditis elegans.